Reading from the N-terminus, the 234-residue chain is Lipoprotein-releasing system ATP-binding protein LolD (234 aa).

The region spanning 7-234 is the ABC transporter domain; it reads LLCNNLCKKY…QDELTVTGAL (228 aa). 43-50 lines the ATP pocket; it reads GSSGSGKS.

This sequence belongs to the ABC transporter superfamily. Lipoprotein translocase (TC 3.A.1.125) family. The complex is composed of two ATP-binding proteins (LolD) and two transmembrane proteins (LolC and LolE).

Its subcellular location is the cell inner membrane. Its function is as follows. Part of the ABC transporter complex LolCDE involved in the translocation of mature outer membrane-directed lipoproteins, from the inner membrane to the periplasmic chaperone, LolA. Responsible for the formation of the LolA-lipoprotein complex in an ATP-dependent manner. The polypeptide is Lipoprotein-releasing system ATP-binding protein LolD (Photorhabdus laumondii subsp. laumondii (strain DSM 15139 / CIP 105565 / TT01) (Photorhabdus luminescens subsp. laumondii)).